The sequence spans 1135 residues: Putative beta-hexosaminidase (1135 aa).

The N-terminal stretch at 1–23 is a signal peptide; that stretch reads MKWVKSGVGILGILLTICHAVTS. Disordered regions lie at residues 970–1082 and 1107–1135; these read AHPP…LPGQ and QMRG…QQAG. The segment covering 986 to 1003 has biased composition (pro residues); the sequence is NMPPPFPPRPPFGPPMLP. Low complexity-rich tracts occupy residues 1004–1026 and 1043–1073; these read PGQM…TALG and TGQA…LPGQ.

This sequence belongs to the glycosyl hydrolase 20 family. As to expression, prismatic layer of shell (at protein level). Expressed primarily in the mantle with highest level in the mantle edge and lower level in the mantle pallium.

The protein localises to the secreted. The catalysed reaction is Hydrolysis of terminal non-reducing N-acetyl-D-hexosamine residues in N-acetyl-beta-D-hexosaminides.. The protein operates within glycan degradation; chitin degradation. The sequence is that of Putative beta-hexosaminidase from Margaritifera margaritifera (Freshwater pearl mussel).